A 628-amino-acid chain; its full sequence is Serine/threonine-protein phosphatase 2A regulatory subunit psrA (628 aa).

Polar residues predominate over residues 1–22 (MKNDHINYQQNLSQSPILNSNK). 3 disordered regions span residues 1-61 (MKND…QIPF), 500-558 (KKKQ…DKPS), and 577-628 (SSHR…YTFT). Low complexity-rich tracts occupy residues 23 to 58 (NQTQQNQQQQQQQQQQNPQQQQQFQHQQVPQLSPQQ) and 524 to 547 (QINQNNNNNNNNINNNNNNNNNNN). The segment covering 600–618 (NNHTNHDSEIENEVKEDFR) has biased composition (basic and acidic residues).

It belongs to the phosphatase 2A regulatory subunit B56 family. As to quaternary structure, PP2A consists of a trimeric holoenzyme, composed of a 37 kDa catalytic subunit (C subunit) and a 65 kDa constant regulatory subunit (A subunit), that associates with a variety of regulatory subunits (B subunit) such as phr2AB (B55) and psrA (B56 homolog). The trimer may partially dissociates into a core 'AC' dimer equally active compared to the trimer. Seems to play a role in proper anterior patterning (pstO and pstAB).

Its subcellular location is the cytoplasm. The protein localises to the cytosol. In terms of biological role, involved in developmental cell fate decision. This is Serine/threonine-protein phosphatase 2A regulatory subunit psrA (psrA) from Dictyostelium discoideum (Social amoeba).